A 359-amino-acid chain; its full sequence is 3-dehydroquinate synthase (359 aa).

Residues 72–77 (EGEIHK), 106–110 (GVIGD), 130–131 (TS), lysine 143, lysine 152, and 170–173 (CLKT) contribute to the NAD(+) site. The Zn(2+) site is built by glutamate 185, histidine 248, and histidine 264.

This sequence belongs to the sugar phosphate cyclases superfamily. Dehydroquinate synthase family. Co(2+) serves as cofactor. The cofactor is Zn(2+). Requires NAD(+) as cofactor.

The protein localises to the cytoplasm. The enzyme catalyses 7-phospho-2-dehydro-3-deoxy-D-arabino-heptonate = 3-dehydroquinate + phosphate. The protein operates within metabolic intermediate biosynthesis; chorismate biosynthesis; chorismate from D-erythrose 4-phosphate and phosphoenolpyruvate: step 2/7. Functionally, catalyzes the conversion of 3-deoxy-D-arabino-heptulosonate 7-phosphate (DAHP) to dehydroquinate (DHQ). This chain is 3-dehydroquinate synthase, found in Dehalococcoides mccartyi (strain ATCC BAA-2100 / JCM 16839 / KCTC 5957 / BAV1).